The primary structure comprises 298 residues: Inosose dehydratase (298 aa).

The protein belongs to the IolE/MocC family. The cofactor is glutathione. It depends on Co(2+) as a cofactor. Requires Mn(2+) as cofactor.

The enzyme catalyses scyllo-inosose = 3D-3,5/4-trihydroxycyclohexane-1,2-dione + H2O. It functions in the pathway polyol metabolism; myo-inositol degradation into acetyl-CoA; acetyl-CoA from myo-inositol: step 2/7. Functionally, catalyzes the dehydration of inosose (2-keto-myo-inositol, 2KMI or 2,4,6/3,5-pentahydroxycyclohexanone) to 3D-(3,5/4)-trihydroxycyclohexane-1,2-dione (D-2,3-diketo-4-deoxy-epi-inositol). This Bacillus velezensis (strain DSM 23117 / BGSC 10A6 / LMG 26770 / FZB42) (Bacillus amyloliquefaciens subsp. plantarum) protein is Inosose dehydratase.